The following is a 325-amino-acid chain: Ribose-phosphate pyrophosphokinase 2 (325 aa).

ATP is bound at residue 96–101; sequence RQDKKD. Asp-135, His-137, Asp-146, and Asp-150 together coordinate Mg(2+). His-137 provides a ligand contact to ATP. The segment at 219-234 is binding of phosphoribosylpyrophosphate; it reads KDRVAILVDDMADTCG.

It belongs to the ribose-phosphate pyrophosphokinase family. As to quaternary structure, homodimer. The active form is probably a hexamer composed of 3 homodimers. Mg(2+) is required as a cofactor.

It carries out the reaction D-ribose 5-phosphate + ATP = 5-phospho-alpha-D-ribose 1-diphosphate + AMP + H(+). Its pathway is metabolic intermediate biosynthesis; 5-phospho-alpha-D-ribose 1-diphosphate biosynthesis; 5-phospho-alpha-D-ribose 1-diphosphate from D-ribose 5-phosphate (route I): step 1/1. Activated by magnesium and inorganic phosphate. Competitively or non-competitively inhibited by ADP, 2,3-bisphosphoglyceride or GDP. Functionally, catalyzes the synthesis of phosphoribosylpyrophosphate (PRPP) that is essential for nucleotide synthesis. The sequence is that of Ribose-phosphate pyrophosphokinase 2 (PRPS2) from Gallus gallus (Chicken).